A 1785-amino-acid polypeptide reads, in one-letter code: Brefeldin A-inhibited guanine nucleotide-exchange protein 2 (1785 aa).

Methionine 1 bears the N-acetylmethionine mark. The interval 2 to 224 (QESQTKSMFV…KPQSPVIQAA (223 aa)) is DCB; DCB:DCB domain and DCB:HUS domain interaction. Phosphoserine is present on residues serine 214, serine 218, and serine 227. The disordered stretch occupies residues 232-285 (RLKHSQAQSKPTTPEKTDLTNGEHARSDSGKVSTENGDAPRERGSSLSGTDDGA). Position 244 is a phosphothreonine (threonine 244). The span at 244–260 (TPEKTDLTNGEHARSDS) shows a compositional bias: basic and acidic residues. 3 positions are modified to phosphoserine: serine 277, serine 348, and serine 349. An HUS; DCB:HUS domain interaction region spans residues 508–528 (ADAQCVVDIYVNYDCDLNAAN). The residue at position 614 (serine 614) is a Phosphoserine. Phosphothreonine is present on threonine 616. At serine 617 the chain carries Phosphoserine. A Phosphothreonine modification is found at threonine 626. Residues 654 to 785 (FNKKPKRGIQ…IIMLTTDLHS (132 aa)) form the SEC7 domain. Serine 700, serine 1511, serine 1513, serine 1514, serine 1525, serine 1528, serine 1534, and serine 1782 each carry phosphoserine. A compositionally biased stretch (polar residues) spans 1514 to 1532 (SIDKNPSERGQSQLSNPTD). Positions 1514-1535 (SIDKNPSERGQSQLSNPTDDSW) are disordered.

Homodimer. Interacts with ARFGEF1/BIG1; both proteins are probably part of the same or very similar macromolecular complexes. Interacts with PRKAR1A, PRKAR2A, PRKAR1B, PRKAR2B, PPP1CC, PDE3A, TNFRSF1A, MYCBP and EXOC7. Interacts with GABRB1, GABRB2 and GABRB3. In vitro phosphorylated by PKA reducing its GEF activity and dephosphorylated by phosphatase PP1. As to expression, expressed in placenta, lung, heart, brain, kidney and pancreas.

The protein localises to the cytoplasm. It is found in the membrane. Its subcellular location is the golgi apparatus. It localises to the perinuclear region. The protein resides in the trans-Golgi network. The protein localises to the endosome. It is found in the cytoskeleton. Its subcellular location is the microtubule organizing center. It localises to the centrosome. The protein resides in the cell projection. The protein localises to the dendrite. It is found in the cytoplasmic vesicle. Its subcellular location is the synapse. Its activity is regulated as follows. Inhibited by brefeldin A. Functionally, promotes guanine-nucleotide exchange on ARF1 and ARF3 and to a lower extent on ARF5 and ARF6. Promotes the activation of ARF1/ARF5/ARF6 through replacement of GDP with GTP. Involved in the regulation of Golgi vesicular transport. Required for the integrity of the endosomal compartment. Involved in trafficking from the trans-Golgi network (TGN) to endosomes and is required for membrane association of the AP-1 complex and GGA1. Seems to be involved in recycling of the transferrin receptor from recycling endosomes to the plasma membrane. Probably is involved in the exit of GABA(A) receptors from the endoplasmic reticulum. Involved in constitutive release of tumor necrosis factor receptor 1 via exosome-like vesicles; the function seems to involve PKA and specifically PRKAR2B. Proposed to act as A kinase-anchoring protein (AKAP) and may mediate crosstalk between Arf and PKA pathways. This Homo sapiens (Human) protein is Brefeldin A-inhibited guanine nucleotide-exchange protein 2 (ARFGEF2).